Here is a 72-residue protein sequence, read N- to C-terminus: Dermaseptin AA-3-4 (72 aa).

Positions 1–22 (MAFLKKSLFLVLFLGLVSLSIC) are cleaved as a signal peptide. Positions 23–43 (DEEKRENEDEEEQEDDEQSEE) are excised as a propeptide. The tract at residues 24–45 (EEKRENEDEEEQEDDEQSEEKR) is disordered. The segment covering 30 to 41 (EDEEEQEDDEQS) has biased composition (acidic residues).

It belongs to the frog skin active peptide (FSAP) family. In terms of tissue distribution, expressed by the skin glands.

The protein localises to the secreted. Functionally, possesses a potent antimicrobial activity against Gram-positive and Gram-negative bacteria. Probably acts by disturbing membrane functions with its amphipathic structure. The chain is Dermaseptin AA-3-4 from Agalychnis annae (Blue-sided leaf frog).